The chain runs to 614 residues: Beta-glucosidase 33 (614 aa).

Residues 1–26 form the signal peptide; it reads MATATLTLFLGLLALTSTILSFNADA. Residues Q113, H217, and 262–263 each bind a beta-D-glucoside; that span reads NE. The Proton donor role is filled by E263. The cysteines at positions 282 and 290 are disulfide-linked. Residue N344 is glycosylated (N-linked (GlcNAc...) asparagine). Y407 contributes to the a beta-D-glucoside binding site. N419, N432, and N439 each carry an N-linked (GlcNAc...) asparagine glycan. Residue E479 coordinates a beta-D-glucoside. E479 functions as the Nucleophile in the catalytic mechanism. N-linked (GlcNAc...) asparagine glycosylation occurs at N491. A beta-D-glucoside contacts are provided by residues W529, 536–537, and F545; that span reads EW.

Belongs to the glycosyl hydrolase 1 family.

It catalyses the reaction Hydrolysis of terminal, non-reducing beta-D-glucosyl residues with release of beta-D-glucose.. This is Beta-glucosidase 33 from Arabidopsis thaliana (Mouse-ear cress).